We begin with the raw amino-acid sequence, 192 residues long: Protein FAM210B, mitochondrial (192 aa).

Residues 1–58 (MAGLLALLGPAGRVGARVRPRATWLLGATAPCAPPPLALALLPPRLDARLLRTARGDC) constitute a mitochondrion transit peptide. Residues 57–80 (DCRGHQDPSQATGTTGSSVSCTEE) form a disordered region. The segment covering 63–77 (DPSQATGTTGSSVSC) has biased composition (polar residues). The 112-residue stretch at 80 to 191 (EKKQSKSQQL…VGFFKPPAAK (112 aa)) folds into the DUF1279 domain. 2 consecutive transmembrane segments (helical) span residues 99–119 (VGVS…YMVV) and 150–170 (FVVA…ITLV).

This sequence belongs to the FAM210 family. As to expression, expressed in late erythroblast differentiation stages. Underexpressed in ovarian cancer epithelia cells compared with normal human ovarian surface epithelia.

It localises to the mitochondrion. The protein resides in the mitochondrion outer membrane. Its function is as follows. Plays a role in erythroid differentiation. Involved in cell proliferation and tumor cell growth suppression. Involved in the metabolic reprogramming of cancer cells in a PDK4-dependent manner. This chain is Protein FAM210B, mitochondrial, found in Homo sapiens (Human).